The sequence spans 140 residues: uncharacterized protein (140 aa).

Belongs to the MG439/MG440 family.

This is an uncharacterized protein from Mycoplasma pneumoniae (strain ATCC 29342 / M129 / Subtype 1) (Mycoplasmoides pneumoniae).